A 758-amino-acid chain; its full sequence is Deoxynucleotidyltransferase terminal-interacting protein 2 (758 aa).

Positions Met1–Arg21 are enriched in polar residues. The tract at residues Met1 to Glu176 is disordered. Residues Ser17, Ser133, Ser137, and Ser140 each carry the phosphoserine modification. Low complexity predominate over residues Asp128–Ser143. Over residues Asn155–Val172 the composition is skewed to polar residues. A phosphoserine mark is found at Ser173 and Ser183. Residue Lys210 forms a Glycyl lysine isopeptide (Lys-Gly) (interchain with G-Cter in SUMO2) linkage. Ser229, Ser240, Ser248, and Ser255 each carry phosphoserine. A compositionally biased stretch (polar residues) spans Ala231 to Ser255. Disordered regions lie at residues Ala231 to Leu277, Lys312 to Ser353, Asp377 to Leu480, and Asp501 to Ser552. Lys317 is covalently cross-linked (Glycyl lysine isopeptide (Lys-Gly) (interchain with G-Cter in SUMO2)). Residues Arg321 to Ser353 are compositionally biased toward polar residues. Residues Ser324 and Ser330 each carry the phosphoserine modification. Glycyl lysine isopeptide (Lys-Gly) (interchain with G-Cter in SUMO2) cross-links involve residues Lys345 and Lys384. Over residues Asp377–Asp387 the composition is skewed to basic and acidic residues. Residues Leu431 to Ser440 show a composition bias toward polar residues. Low complexity predominate over residues Ser447–Ser456. Ser476 and Ser512 each carry phosphoserine. Residues Ser512–Lys541 adopt a coiled-coil conformation. The segment covering Ala515–Leu550 has biased composition (acidic residues). The segment at Leu550–Gln607 is tdBR region; mediates interaction with DNTT. Residues Lys560, Lys586, and Lys608 each participate in a glycyl lysine isopeptide (Lys-Gly) (interchain with G-Cter in SUMO2) cross-link. Thr612 carries the post-translational modification Phosphothreonine. Residues Val621 to Trp647 form a disordered region. Residue Lys628 forms a Glycyl lysine isopeptide (Lys-Gly) (interchain with G-Cter in SUMO2) linkage. A compositionally biased stretch (basic residues) spans Arg630 to Arg639. Residues Lys651, Lys660, Lys688, and Lys733 each participate in a glycyl lysine isopeptide (Lys-Gly) (interchain with G-Cter in SUMO2) cross-link.

As to quaternary structure, forms a ternary complex with DNTT and core histone; interaction with PCNA releases DNTT and H2A/H2B histones from this ternary complex. Interacts with ESR1, ESR2, PPARG and RXRA. Part of the small subunit (SSU) processome, composed of more than 70 proteins and the RNA chaperone small nucleolar RNA (snoRNA) U3.

It localises to the nucleus. The protein resides in the nucleolus. Regulates the transcriptional activity of DNTT and ESR1. May function as a chromatin remodeling protein. Part of the small subunit (SSU) processome, first precursor of the small eukaryotic ribosomal subunit. During the assembly of the SSU processome in the nucleolus, many ribosome biogenesis factors, an RNA chaperone and ribosomal proteins associate with the nascent pre-rRNA and work in concert to generate RNA folding, modifications, rearrangements and cleavage as well as targeted degradation of pre-ribosomal RNA by the RNA exosome. The chain is Deoxynucleotidyltransferase terminal-interacting protein 2 (Dnttip2) from Mus musculus (Mouse).